The primary structure comprises 445 residues: MGSQELQRKLGFWAVLAIAVGTTVGSGIFVSVGEVAKAAGTPWLTVLAFVIGGLIVIPQMCVYAELSTAYPENGADYVYLKNAGSRPLAFLSGWASFWANDAPSLSIMALAIVSNLGFLTPIDPLLGKFIAAGLIIAFMLLHLRSVEGGAAFQTLITIAKIIPFTIVIGLGIFWFKAENFAAPTTTAIGATGSFMALLAGISATSWSYTGMASICYMTGEIKNPGKTMPRALIGSCLLVLVLYTLLALVISGLMPFDKLANSETPISDALTWIPALGSTAGIFVAITAMIVILGSLSSCVMYQPRLEYAMAKDNLFFKCFGHVHPKYNTPDVSIILQGALGIFFIFVSDLTSLLGYFTLVMCFKNTLTFGSIIWCRKRDDYKPLWRTPAFGLMTTLAIASSLILVASTFVWAPIPGLICAVIVIATGLPAYAFWAKRSRQLNALS.

A run of 12 helical transmembrane segments spans residues 10–30 (LGFWAVLAIAVGTTVGSGIFV), 38–58 (AAGTPWLTVLAFVIGGLIVIP), 93–113 (GWASFWANDAPSLSIMALAIV), 121–141 (PIDPLLGKFIAAGLIIAFMLL), 155–175 (LITIAKIIPFTIVIGLGIFWF), 181–201 (AAPTTTAIGATGSFMALLAGI), 236–256 (CLLVLVLYTLLALVISGLMPF), 273–293 (IPALGSTAGIFVAITAMIVIL), 334–354 (IILQGALGIFFIFVSDLTSLL), 355–375 (GYFTLVMCFKNTLTFGSIIWC), 389–410 (AFGLMTTLAIASSLILVASTFV), and 417–435 (LICAVIVIATGLPAYAFWA).

The protein belongs to the amino acid-polyamine-organocation (APC) superfamily.

It localises to the cell inner membrane. It carries out the reaction N(6)-(D-fructosyl)-L-lysine(in) = N(6)-(D-fructosyl)-L-lysine(out). The enzyme catalyses N(6)-(D-psicosyl)-L-lysine(in) = N(6)-(D-psicosyl)-L-lysine(out). It participates in carbohydrate metabolism; fructoselysine degradation. Its function is as follows. Is likely involved in the transport of fructoselysine and psicoselysine to the cytoplasm, where they are degraded. In Escherichia coli (strain K12), this protein is Probable fructoselysine/psicoselysine transporter FrlA.